A 953-amino-acid chain; its full sequence is Isoleucine--tRNA ligase (953 aa).

The 'HIGH' region signature appears at 58–68; sequence PYANGNIHLGH. An L-isoleucyl-5'-AMP-binding site is contributed by Glu565. The 'KMSKS' region signature appears at 606-610; it reads KMSKS. Lys609 contributes to the ATP binding site. Residues Cys916, Cys919, Cys936, and Cys939 each coordinate Zn(2+).

This sequence belongs to the class-I aminoacyl-tRNA synthetase family. IleS type 1 subfamily. As to quaternary structure, monomer. The cofactor is Zn(2+).

The protein resides in the cytoplasm. The catalysed reaction is tRNA(Ile) + L-isoleucine + ATP = L-isoleucyl-tRNA(Ile) + AMP + diphosphate. Catalyzes the attachment of isoleucine to tRNA(Ile). As IleRS can inadvertently accommodate and process structurally similar amino acids such as valine, to avoid such errors it has two additional distinct tRNA(Ile)-dependent editing activities. One activity is designated as 'pretransfer' editing and involves the hydrolysis of activated Val-AMP. The other activity is designated 'posttransfer' editing and involves deacylation of mischarged Val-tRNA(Ile). The polypeptide is Isoleucine--tRNA ligase (Colwellia psychrerythraea (strain 34H / ATCC BAA-681) (Vibrio psychroerythus)).